The primary structure comprises 99 residues: Large ribosomal subunit protein eL30 (99 aa).

This sequence belongs to the eukaryotic ribosomal protein eL30 family.

This is Large ribosomal subunit protein eL30 from Methanosarcina acetivorans (strain ATCC 35395 / DSM 2834 / JCM 12185 / C2A).